We begin with the raw amino-acid sequence, 89 residues long: Small ribosomal subunit protein uS15 (89 aa).

Residues 1–21 show a composition bias toward basic and acidic residues; sequence MAITQERKNQLISEFKTHESD. The disordered stretch occupies residues 1–23; sequence MAITQERKNQLISEFKTHESDTG.

It belongs to the universal ribosomal protein uS15 family. In terms of assembly, part of the 30S ribosomal subunit. Forms a bridge to the 50S subunit in the 70S ribosome, contacting the 23S rRNA.

Its function is as follows. One of the primary rRNA binding proteins, it binds directly to 16S rRNA where it helps nucleate assembly of the platform of the 30S subunit by binding and bridging several RNA helices of the 16S rRNA. In terms of biological role, forms an intersubunit bridge (bridge B4) with the 23S rRNA of the 50S subunit in the ribosome. This Bacillus velezensis (strain DSM 23117 / BGSC 10A6 / LMG 26770 / FZB42) (Bacillus amyloliquefaciens subsp. plantarum) protein is Small ribosomal subunit protein uS15.